The primary structure comprises 360 residues: Photosystem II protein D1 2 (360 aa).

Helical transmembrane passes span 29–46 (YIGWFGVLMIPTLLAATT), 118–133 (HFLTGVFCYLGREWEL), and 142–156 (WICLAFSAPVAAATA). Residue H118 coordinates chlorophyll a. Y126 contributes to the pheophytin a binding site. D170 and E189 together coordinate [CaMn4O5] cluster. A helical membrane pass occupies residues 197–218 (FHMLGVAGVFGGSLFSAMHGSL). H198 provides a ligand contact to chlorophyll a. Residues H215 and 264-265 (SF) contribute to the a quinone site. H215 provides a ligand contact to Fe cation. H272 serves as a coordination point for Fe cation. A helical membrane pass occupies residues 274–288 (FLAAWPVIGIWFTAL). [CaMn4O5] cluster is bound by residues H332, E333, D342, and A344. A propeptide spanning residues 345 to 360 (AGEVAPVALTAPAING) is cleaved from the precursor.

This sequence belongs to the reaction center PufL/M/PsbA/D family. In terms of assembly, PSII is composed of 1 copy each of membrane proteins PsbA, PsbB, PsbC, PsbD, PsbE, PsbF, PsbH, PsbI, PsbJ, PsbK, PsbL, PsbM, PsbT, PsbX, PsbY, PsbZ, Psb30/Ycf12, peripheral proteins PsbO, CyanoQ (PsbQ), PsbU, PsbV and a large number of cofactors. It forms dimeric complexes. Requires The D1/D2 heterodimer binds P680, chlorophylls that are the primary electron donor of PSII, and subsequent electron acceptors. It shares a non-heme iron and each subunit binds pheophytin, quinone, additional chlorophylls, carotenoids and lipids. D1 provides most of the ligands for the Mn4-Ca-O5 cluster of the oxygen-evolving complex (OEC). There is also a Cl(-1) ion associated with D1 and D2, which is required for oxygen evolution. The PSII complex binds additional chlorophylls, carotenoids and specific lipids. as cofactor. Tyr-161 forms a radical intermediate that is referred to as redox-active TyrZ, YZ or Y-Z. In terms of processing, C-terminally processed by CtpA; processing is essential to allow assembly of the oxygen-evolving complex and thus photosynthetic growth.

It is found in the cellular thylakoid membrane. The enzyme catalyses 2 a plastoquinone + 4 hnu + 2 H2O = 2 a plastoquinol + O2. Photosystem II (PSII) is a light-driven water:plastoquinone oxidoreductase that uses light energy to abstract electrons from H(2)O, generating O(2) and a proton gradient subsequently used for ATP formation. It consists of a core antenna complex that captures photons, and an electron transfer chain that converts photonic excitation into a charge separation. The D1/D2 (PsbA/PsbD) reaction center heterodimer binds P680, the primary electron donor of PSII as well as several subsequent electron acceptors. In Trichormus variabilis (strain ATCC 29413 / PCC 7937) (Anabaena variabilis), this protein is Photosystem II protein D1 2.